Here is a 277-residue protein sequence, read N- to C-terminus: Caspase-3 (277 aa).

At methionine 1 the chain carries N-acetylmethionine. Propeptides lie at residues methionine 1–aspartate 9 and serine 10–aspartate 28. N6-acetyllysine is present on lysine 11. Serine 26 carries the post-translational modification Phosphoserine. Catalysis depends on residues histidine 121 and cysteine 163. Residue cysteine 163 is modified to S-nitrosocysteine; in inhibited form.

Belongs to the peptidase C14A family. In terms of assembly, heterotetramer that consists of two anti-parallel arranged heterodimers, each one formed by a 17 kDa (p17) and a 12 kDa (p12) subunit. Interacts with BIRC6/bruce. In terms of processing, cleavage by granzyme B, caspase-6, caspase-8 and caspase-10 generates the two active subunits. Additional processing of the propeptides is likely due to the autocatalytic activity of the activated protease. Active heterodimers between the small subunit of caspase-7 protease and the large subunit of caspase-3 also occur and vice versa. S-nitrosylated on its catalytic site cysteine in unstimulated cell lines and denitrosylated upon activation of the Fas apoptotic pathway, associated with an increase in intracellular caspase activity. Fas therefore activates caspase-3 not only by inducing the cleavage of the caspase zymogen to its active subunits, but also by stimulating the denitrosylation of its active site thiol. Post-translationally, ubiquitinated by BIRC6; this activity is inhibited by DIABLO/SMAC. Highest expression in spleen, lung, liver, kidney and heart. Lower expression in brain, skeletal muscle and testis.

It localises to the cytoplasm. The catalysed reaction is Strict requirement for an Asp residue at positions P1 and P4. It has a preferred cleavage sequence of Asp-Xaa-Xaa-Asp-|- with a hydrophobic amino-acid residue at P2 and a hydrophilic amino-acid residue at P3, although Val or Ala are also accepted at this position.. Inhibited by BIRC6; following inhibition of BIRC6-caspase binding by DIABLO/SMAC, BIRC6 is subjected to caspase cleavage, leading to an increase in active caspases. Thiol protease that acts as a major effector caspase involved in the execution phase of apoptosis. Following cleavage and activation by initiator caspases (CASP8, CASP9 and/or CASP10), mediates execution of apoptosis by catalyzing cleavage of many proteins. At the onset of apoptosis, it proteolytically cleaves poly(ADP-ribose) polymerase PARP1 at a '216-Asp-|-Gly-217' bond. Cleaves and activates sterol regulatory element binding proteins (SREBPs) between the basic helix-loop-helix leucine zipper domain and the membrane attachment domain. Cleaves and activates caspase-6, -7 and -9 (CASP6, CASP7 and CASP9, respectively). Cleaves and inactivates interleukin-18 (IL18). Triggers cell adhesion in sympathetic neurons through RET cleavage. Cleaves IL-1 beta between an Asp and an Ala, releasing the mature cytokine which is involved in a variety of inflammatory processes. Cleaves and inhibits serine/threonine-protein kinase AKT1 in response to oxidative stress. Acts as an inhibitor of type I interferon production during virus-induced apoptosis by mediating cleavage of antiviral proteins CGAS, IRF3 and MAVS, thereby preventing cytokine overproduction. Also involved in pyroptosis by mediating cleavage and activation of gasdermin-E (GSDME). Cleaves XRCC4 and phospholipid scramblase proteins XKR4, XKR8 and XKR9, leading to promote phosphatidylserine exposure on apoptotic cell surface. Cleaves BIRC6 following inhibition of BIRC6-caspase binding by DIABLO/SMAC. The sequence is that of Caspase-3 (Casp3) from Mus musculus (Mouse).